The primary structure comprises 326 residues: MATTERKPLLLDFEKPLAELATRIDQIRQLAEENGVDVSGQIRQLEARAMQLREEIFTSLSPSQRLQVARHPRRPSTLDYIQAISDEWMELHGDRCGGDDPALVGGIGRLSGQPVVMLGHQKGRDTKDNIARNFGMPYPGGYRKAMRLMEHANKFSMPILTFIDTPGAWSGVEAEHQGQGEAIAYNLREMFCLDVPIICTVIGEGGSGGALGIGVGDRLLMFEHSVYTVATPEACAAILWKDAGKAPQAAVALKIISHDLKRLGIIDQILPEPTGGAHSDPLKAATTLKQVLLENLDELNHLTAPERRQLRYEKFRKIGVFTEVAH.

The CoA carboxyltransferase C-terminal domain occupies 45–298 (LEARAMQLRE…KQVLLENLDE (254 aa)).

The protein belongs to the AccA family. As to quaternary structure, acetyl-CoA carboxylase is a heterohexamer composed of biotin carboxyl carrier protein (AccB), biotin carboxylase (AccC) and two subunits each of ACCase subunit alpha (AccA) and ACCase subunit beta (AccD).

The protein localises to the cytoplasm. It catalyses the reaction N(6)-carboxybiotinyl-L-lysyl-[protein] + acetyl-CoA = N(6)-biotinyl-L-lysyl-[protein] + malonyl-CoA. Its pathway is lipid metabolism; malonyl-CoA biosynthesis; malonyl-CoA from acetyl-CoA: step 1/1. Component of the acetyl coenzyme A carboxylase (ACC) complex. First, biotin carboxylase catalyzes the carboxylation of biotin on its carrier protein (BCCP) and then the CO(2) group is transferred by the carboxyltransferase to acetyl-CoA to form malonyl-CoA. This is Acetyl-coenzyme A carboxylase carboxyl transferase subunit alpha from Nostoc punctiforme (strain ATCC 29133 / PCC 73102).